The chain runs to 291 residues: Porphobilinogen deaminase (291 aa).

S-(dipyrrolylmethanemethyl)cysteine is present on Cys-237.

The protein belongs to the HMBS family. In terms of assembly, monomer. Requires dipyrromethane as cofactor.

It catalyses the reaction 4 porphobilinogen + H2O = hydroxymethylbilane + 4 NH4(+). The protein operates within porphyrin-containing compound metabolism; protoporphyrin-IX biosynthesis; coproporphyrinogen-III from 5-aminolevulinate: step 2/4. Tetrapolymerization of the monopyrrole PBG into the hydroxymethylbilane pre-uroporphyrinogen in several discrete steps. The protein is Porphobilinogen deaminase of Clostridium perfringens (strain ATCC 13124 / DSM 756 / JCM 1290 / NCIMB 6125 / NCTC 8237 / Type A).